The sequence spans 457 residues: Choline kinase alpha (457 aa).

The tract at residues 1–86 (MKTKFCTGGE…PPADEQPEPR (86 aa)) is disordered. Positions 13–32 (PSPLGLLLSCGSGSAAPAPG) are enriched in low complexity. A compositionally biased stretch (pro residues) spans 55–80 (LALPPPPPLPLPLPLPQPPPPQPPAD). ATP contacts are provided by residues 117-123 (RGGLSNM), Arg146, and 207-213 (QFIPSRR). 119 to 121 (GLS) is a binding site for phosphocholine. Lys247 carries the N6-acetyllysine modification. Position 279 is a phosphoserine (Ser279). Residues Gln308 and Asp330 each contribute to the ATP site.

It belongs to the choline/ethanolamine kinase family. As to quaternary structure, homodimer. Heterodimer with CHKB. In terms of assembly, monomer; acetylation by KAT5 promotes dissociation of the homodimer and monomerization. (Microbial infection) Interacts with PI4KA/PI4KIIIalpha; CHKA bridges PI4KA/PI4KIIIalpha and hepatitis C virus (HCV) non-structural protein 5A (NS5A) and potentiates NS5A-stimulated PI4KA activity, which then facilitates the targeting of the ternary complex to the ER for viral replication. In terms of processing, phosphorylated at Ser-279 by AMPK in response to glucose deprivation, leading to localization to lipid droplets. Post-translationally, acetylated by KAT5 at Lys-247 following phosphorylation by AMPK, leading to monomerization and conversion into a tyrosine-protein kinase.

Its subcellular location is the cytoplasm. It is found in the cytosol. It localises to the lipid droplet. It catalyses the reaction choline + ATP = phosphocholine + ADP + H(+). The enzyme catalyses ethanolamine + ATP = phosphoethanolamine + ADP + H(+). It carries out the reaction L-tyrosyl-[protein] + ATP = O-phospho-L-tyrosyl-[protein] + ADP + H(+). Its pathway is phospholipid metabolism; phosphatidylcholine biosynthesis; phosphocholine from choline: step 1/1. It participates in phospholipid metabolism; phosphatidylethanolamine biosynthesis; phosphatidylethanolamine from ethanolamine: step 1/3. With respect to regulation, homodimerization or heterodimerization is required for the choline and ethanolamine kinase activities. Functionally, plays a key role in phospholipid biosynthesis by catalyzing the phosphorylation of free choline to phosphocholine, the first step in phosphatidylcholine biosynthesis. Also phosphorylates ethanolamine, thereby contributing to phosphatidylethanolamine biosynthesis. Has higher activity with choline. May contribute to tumor cell growth. Its function is as follows. This isoform plays a key role in lipolysis of lipid droplets following glucose deprivation. In response to glucose deprivation, phosphorylated by AMPK, promoting localization to lipid droplets. Phosphorylation is followed by acetylation by KAT5, leading to dissociation of the homodimer into a monomer. Monomeric CHKA isoform 1 is converted into a tyrosine-protein kinase, which phosphorylates lipid droplet structural proteins PLIN2 and PLIN3, leading to lipolysis of lipid droplets. This Homo sapiens (Human) protein is Choline kinase alpha (CHKA).